Reading from the N-terminus, the 80-residue chain is Exodeoxyribonuclease 7 small subunit (80 aa).

Belongs to the XseB family. As to quaternary structure, heterooligomer composed of large and small subunits.

It is found in the cytoplasm. The catalysed reaction is Exonucleolytic cleavage in either 5'- to 3'- or 3'- to 5'-direction to yield nucleoside 5'-phosphates.. Its function is as follows. Bidirectionally degrades single-stranded DNA into large acid-insoluble oligonucleotides, which are then degraded further into small acid-soluble oligonucleotides. The chain is Exodeoxyribonuclease 7 small subunit from Erwinia tasmaniensis (strain DSM 17950 / CFBP 7177 / CIP 109463 / NCPPB 4357 / Et1/99).